Here is a 408-residue protein sequence, read N- to C-terminus: Peptidase T (408 aa).

Residue histidine 78 participates in Zn(2+) binding. The active site involves aspartate 80. Residue aspartate 141 coordinates Zn(2+). The Proton acceptor role is filled by glutamate 175. 3 residues coordinate Zn(2+): glutamate 176, aspartate 198, and histidine 380.

It belongs to the peptidase M20B family. The cofactor is Zn(2+).

Its subcellular location is the cytoplasm. The enzyme catalyses Release of the N-terminal residue from a tripeptide.. Cleaves the N-terminal amino acid of tripeptides. This chain is Peptidase T, found in Clostridium botulinum (strain Loch Maree / Type A3).